Reading from the N-terminus, the 341-residue chain is Methionine import ATP-binding protein MetN 2 (341 aa).

An ABC transporter domain is found at 2–241 (IELKEVVKEY…PQHTVTKRFV (240 aa)). 38–45 (GFSGAGKS) is a binding site for ATP.

This sequence belongs to the ABC transporter superfamily. Methionine importer (TC 3.A.1.24) family. The complex is composed of two ATP-binding proteins (MetN), two transmembrane proteins (MetI) and a solute-binding protein (MetQ).

It is found in the cell membrane. It catalyses the reaction L-methionine(out) + ATP + H2O = L-methionine(in) + ADP + phosphate + H(+). The catalysed reaction is D-methionine(out) + ATP + H2O = D-methionine(in) + ADP + phosphate + H(+). Functionally, part of the ABC transporter complex MetNIQ involved in methionine import. Responsible for energy coupling to the transport system. The polypeptide is Methionine import ATP-binding protein MetN 2 (Staphylococcus aureus (strain USA300)).